The chain runs to 349 residues: Quinone oxidoreductase-like protein 1 (349 aa).

This sequence belongs to the zinc-containing alcohol dehydrogenase family. Quinone oxidoreductase subfamily. As to quaternary structure, homodimer. Component of the FERRY complex composed of five subunits, TBCK, PPP1R21, FERRY3, CRYZL1 and GATD1 with a ratio of 1:2:1:2:4, respectively. In terms of tissue distribution, ubiquitous.

The protein localises to the early endosome. Functionally, component of the FERRY complex (Five-subunit Endosomal Rab5 and RNA/ribosome intermediary). The FERRY complex directly interacts with mRNAs and RAB5A, and functions as a RAB5A effector involved in the localization and the distribution of specific mRNAs most likely by mediating their endosomal transport. The complex recruits mRNAs and ribosomes to early endosomes through direct mRNA-interaction. This Homo sapiens (Human) protein is Quinone oxidoreductase-like protein 1 (CRYZL1).